The primary structure comprises 442 residues: Large ribosomal subunit protein mL65 (442 aa).

Belongs to the mitochondrion-specific ribosomal protein mL65 family. Component of the mitochondrial ribosome small subunit (28S) which comprises a 12S rRNA and about 30 distinct proteins.

The protein resides in the mitochondrion. The polypeptide is Large ribosomal subunit protein mL65 (Mrps30) (Mus musculus (Mouse)).